A 566-amino-acid polypeptide reads, in one-letter code: Chaperonin GroEL 1 (566 aa).

ATP contacts are provided by residues Thr-29–Pro-32, Asp-86–Thr-90, Gly-413, and Asp-492. Residues Asp-520 to Gly-540 form a disordered region. Residues Gly-529 to Gly-540 show a composition bias toward gly residues.

It belongs to the chaperonin (HSP60) family. Forms a cylinder of 14 subunits composed of two heptameric rings stacked back-to-back. Interacts with the co-chaperonin GroES.

It is found in the cytoplasm. The catalysed reaction is ATP + H2O + a folded polypeptide = ADP + phosphate + an unfolded polypeptide.. In terms of biological role, together with its co-chaperonin GroES, plays an essential role in assisting protein folding. The GroEL-GroES system forms a nano-cage that allows encapsulation of the non-native substrate proteins and provides a physical environment optimized to promote and accelerate protein folding. The protein is Chaperonin GroEL 1 of Prochlorococcus marinus (strain MIT 9313).